The sequence spans 150 residues: Large ribosomal subunit protein uL11 (150 aa).

Positions 83 to 111 (AAGLKPQGKRNRAKGSEKPGRQTAGTVTA) are disordered.

Belongs to the universal ribosomal protein uL11 family. Part of the ribosomal stalk of the 50S ribosomal subunit. Interacts with L10 and the large rRNA to form the base of the stalk. L10 forms an elongated spine to which L12 dimers bind in a sequential fashion forming a multimeric L10(L12)X complex. Post-translationally, one or more lysine residues are methylated.

Functionally, forms part of the ribosomal stalk which helps the ribosome interact with GTP-bound translation factors. This chain is Large ribosomal subunit protein uL11, found in Paracoccus denitrificans (strain Pd 1222).